A 502-amino-acid polypeptide reads, in one-letter code: Myocilin (502 aa).

The first 31 residues, 1–31, serve as a signal peptide directing secretion; sequence MPSCAYCCSCGPKMPALQLLFLACLVWGMGA. A coiled-coil region spans residues 82 to 183; that stretch reads ADLESTKARV…QEVARLRRGQ (102 aa). Residues 166–198 form a disordered region; the sequence is ARRLEGSSQEVARLRRGQCPSTHHPSQDMLPGS. N-linked (GlcNAc...) asparagine glycosylation occurs at N229. The 260-residue stretch at 242–501 folds into the Olfactomedin-like domain; the sequence is GCGVLMWVGE…MVTYDIKLSE (260 aa). Residues C243 and C431 are joined by a disulfide bond. Residues D378, N426, A427, V475, and D476 each coordinate Ca(2+).

As to quaternary structure, homodimer (via N-terminus). Can also form higher oligomers. Interacts with OLFM3, FN1, NRCAM, GLDN and NFASC. Interacts (via N-terminus) with MYL2. Interacts with SFRP1, FRZB, FZD7, FZD10, FZD1 and WIF1; regulates Wnt signaling. Interacts with SNTA1; regulates muscle hypertrophy. Interacts with ERBB2 and ERBB3; activates ERBB2-ERBB3 signaling pathway. Interacts with SNCG; affects its secretion and its aggregation. Post-translationally, palmitoylated. In terms of processing, undergoes a calcium-dependent proteolytic cleavage at Gln-225 by CAPN2 in the endoplasmic reticulum. The result is the production of two fragments, one of 35 kDa containing the C-terminal olfactomedin-like domain, and another of 20 kDa containing the N-terminal leucine zipper-like domain. Glycosylated. In terms of tissue distribution, highly expressed in skeletal muscle and retina. Also detected at lower levels in thyroid gland but not in other endocrine glands such as the adrenal or pituitary glands.

The protein resides in the secreted. The protein localises to the golgi apparatus. Its subcellular location is the cytoplasmic vesicle. It is found in the extracellular space. It localises to the extracellular matrix. The protein resides in the extracellular exosome. The protein localises to the mitochondrion. Its subcellular location is the mitochondrion intermembrane space. It is found in the mitochondrion inner membrane. It localises to the mitochondrion outer membrane. The protein resides in the rough endoplasmic reticulum. The protein localises to the cell projection. Its subcellular location is the cilium. It is found in the endoplasmic reticulum. Its function is as follows. Secreted glycoprotein regulating the activation of different signaling pathways in adjacent cells to control different processes including cell adhesion, cell-matrix adhesion, cytoskeleton organization and cell migration. Promotes substrate adhesion, spreading and formation of focal contacts. Negatively regulates cell-matrix adhesion and stress fiber assembly through Rho protein signal transduction. Modulates the organization of actin cytoskeleton by stimulating the formation of stress fibers through interactions with components of Wnt signaling pathways. Promotes cell migration through activation of PTK2 and the downstream phosphatidylinositol 3-kinase signaling. Plays a role in bone formation and promotes osteoblast differentiation in a dose-dependent manner through mitogen-activated protein kinase signaling. Mediates myelination in the peripheral nervous system through ERBB2/ERBB3 signaling. Plays a role as a regulator of muscle hypertrophy through the components of dystrophin-associated protein complex. Involved in positive regulation of mitochondrial depolarization. Plays a role in neurite outgrowth. May participate in the obstruction of fluid outflow in the trabecular meshwork. The sequence is that of Myocilin (Myoc) from Rattus norvegicus (Rat).